Here is a 210-residue protein sequence, read N- to C-terminus: DNA-directed RNA polymerases I, II, and III subunit RPABC1 (210 aa).

Methionine 1 bears the N-acetylmethionine mark. A Glycyl lysine isopeptide (Lys-Gly) (interchain with G-Cter in SUMO2) cross-link involves residue lysine 81.

The protein belongs to the archaeal Rpo5/eukaryotic RPB5 RNA polymerase subunit family. Component of the RNA polymerase I (Pol I), RNA polymerase II (Pol II) and RNA polymerase III (Pol III) complexes consisting of at least 13, 12 and 17 subunits, respectively. Pol I complex consists of a ten-subunit catalytic core composed of POLR1A/RPA1, POLR1B/RPA2, POLR1C/RPAC1, POLR1D/RPAC2, POLR1H/RPA12, POLR2E/RPABC1, POLR2F/RPABC2, POLR2H/RPABC3, POLR2K/RPABC4 and POLR2L/RPABC5; a mobile stalk subunit POLR1F/RPA43 protruding from the core and additional subunits homologous to general transcription factors POLR1E/RPA49 and POLR1G/RPA34. Part of Pol I pre-initiation complex (PIC), in which Pol I core assembles with RRN3 and promoter-bound UTBF and SL1/TIF-IB complex. Pol II complex contains a ten-subunit catalytic core composed of POLR2A/RPB1, POLR2B/RPB2, POLR2C/RPB3, POLR2I/RPB9, POLR2J/RPB11, POLR2E/RPABC1, POLR2F/RPABC2, POLR2H/RPABC3, POLR2K/RPABC4 and POLR2L/RPABC5 and a mobile stalk composed of two subunits POLR2D/RPB4 and POLR2G/RPB7. Part of Pol II(G) complex, in which Pol II core associates with an additional subunit POLR2M; unlike conventional Pol II, Pol II(G) functions as a transcriptional repressor. Part of TBP-based Pol II pre-initiation complex (PIC), in which Pol II core assembles with general transcription factors and other specific initiation factors including GTF2E1, GTF2E2, GTF2F1, GTF2F2, TCEA1, ERCC2, ERCC3, GTF2H2, GTF2H3, GTF2H4, GTF2H5, GTF2A1, GTF2A2, GTF2B and TBP; this large multi-subunit PIC complex mediates DNA unwinding and targets Pol II core to the transcription start site where the first phosphodiester bond forms. In Pol II complex, this subunit is present in 2-fold molar excess over the other subunits. Pol III complex consists of a ten-subunit catalytic core composed of POLR3A/RPC1, POLR3B/RPC2, POLR1C/RPAC1, POLR1D/RPAC2, POLR3K/RPC10, POLR2E/RPABC1, POLR2F/RPABC2, POLR2H/RPABC3, POLR2K/RPABC4 and POLR2L/RPABC5; a mobile stalk composed of two subunits POLR3H/RPC8 and CRCP/RPC9, protruding from the core and functioning primarily in transcription initiation; and additional subunits homologous to general transcription factors of the RNA polymerase II machinery, POLR3C/RPC3-POLR3F/RPC6-POLR3G/RPC7 heterotrimer required for transcription initiation and POLR3D/RPC4-POLR3E/RPC5 heterodimer involved in both transcription initiation and termination. Component of the PAQosome complex which is responsible for the biogenesis of several protein complexes and which consists of R2TP complex members RUVBL1, RUVBL2, RPAP3 and PIH1D1, URI complex members PFDN2, PFDN6, PDRG1, UXT and URI1 as well as ASDURF, POLR2E and DNAAF10/WDR92. Interacts with URI1.

It localises to the nucleus. The protein localises to the nucleolus. In terms of biological role, DNA-dependent RNA polymerase catalyzes the transcription of DNA into RNA using the four ribonucleoside triphosphates as substrates. Common component of RNA polymerases I, II and III which synthesize ribosomal RNA precursors, mRNA precursors and many functional non-coding RNAs, and small RNAs, such as 5S rRNA and tRNAs, respectively. Pol II is the central component of the basal RNA polymerase II transcription machinery. Pols are composed of mobile elements that move relative to each other. In Pol II, POLR2E/RPABC1 is part of the lower jaw surrounding the central large cleft and thought to grab the incoming DNA template. Seems to be the major component in this process. The protein is DNA-directed RNA polymerases I, II, and III subunit RPABC1 of Mus musculus (Mouse).